We begin with the raw amino-acid sequence, 2197 residues long: Non-reducing polyketide synthase Preu6 (2197 aa).

The tract at residues 14–253 (FFCPQSRAPP…HNPENAELAK (240 aa)) is N-terminal acylcarrier protein transacylase domain (SAT). Residues 375–797 (DDAIAITGAS…GSNAAVICVE (423 aa)) enclose the Ketosynthase family 3 (KS3) domain. Residues Cys-546, His-681, and His-720 each act as for beta-ketoacyl synthase activity in the active site. Residues 901-1198 (LVFSGQNTNA…SKPDSQVFQS (298 aa)) form a malonyl-CoA:ACP transacylase (MAT) domain region. Ser-988 (for acyl/malonyl transferase activity) is an active-site residue. Residues 1258–1282 (ATEASQASTTSDTIQSTPTQTVQSP) form a disordered region. Positions 1260–1281 (EASQASTTSDTIQSTPTQTVQS) are enriched in polar residues. An N-terminal hotdog fold region spans residues 1276–1403 (TQTVQSPPKL…GRVILTESSV (128 aa)). Positions 1276–1576 (TQTVQSPPKL…FNKMEISKLA (301 aa)) constitute a PKS/mFAS DH domain. The product template (PT) domain stretch occupies residues 1284-1575 (KLISRLASLQ…RFNKMEISKL (292 aa)). His-1310 (proton acceptor; for dehydratase activity) is an active-site residue. The tract at residues 1424 to 1576 (AEKLMSSRAY…FNKMEISKLA (153 aa)) is C-terminal hotdog fold. The active-site Proton donor; for dehydratase activity is Asp-1487. Polar residues predominate over residues 1581–1591 (SVNASSPTGGR). The tract at residues 1581–1614 (SVNASSPTGGRTQPPAAPKTQAQPMASRPSPTPL) is disordered. 2 consecutive Carrier domains span residues 1639-1719 (NDIG…SQKM) and 1748-1824 (NSIT…ATPP). Ser-1673 and Ser-1782 each carry O-(pantetheine 4'-phosphoryl)serine. The tract at residues 1817-1841 (LGASATPPSTTGSSTPGDISTAATT) is disordered. Residues 1818 to 1833 (GASATPPSTTGSSTPG) show a composition bias toward low complexity. The interval 1870–2197 (DSYQVKTVEY…PGLDFLIQNA (328 aa)) is thioesterase (TE) domain. Residues Ser-1990 and Asp-2137 each act as for thioesterase activity in the active site.

Pantetheine 4'-phosphate is required as a cofactor.

The enzyme catalyses 6 malonyl-CoA + 2 acetyl-CoA + 5 H(+) = o-orsellinate depside + 6 CO2 + 8 CoA + H2O. Functionally, non-reducing polyketide synthase; part of a gene cluster that mediates the biosynthesis of a yet unidentified natural product. The first step in the pathway is performed by Preu6 that condenses 2 acetyl-CoA starter units with 6 malonyl-CoA units to produce lecanoric acid (LA), also known as orsellinate depside, an intermediate that has significant antifungal activity against the plant pathogen Botryosphaeria berengeriana. The biosynthesis probably occurs via the formation of 2 orsellinate intermediates fused together by the C-terminal thioesterase (TE) domain that finally releases lecanoric acid. In Preussia isomera (Coprophilous fungus), this protein is Non-reducing polyketide synthase Preu6.